The following is an 83-amino-acid chain: Small ribosomal subunit protein bS16 (83 aa).

It belongs to the bacterial ribosomal protein bS16 family.

The protein is Small ribosomal subunit protein bS16 of Pseudomonas fluorescens (strain SBW25).